Consider the following 122-residue polypeptide: Large ribosomal subunit protein bL12 (122 aa).

This sequence belongs to the bacterial ribosomal protein bL12 family. In terms of assembly, homodimer. Part of the ribosomal stalk of the 50S ribosomal subunit. Forms a multimeric L10(L12)X complex, where L10 forms an elongated spine to which 2 to 4 L12 dimers bind in a sequential fashion. Binds GTP-bound translation factors.

Forms part of the ribosomal stalk which helps the ribosome interact with GTP-bound translation factors. Is thus essential for accurate translation. The polypeptide is Large ribosomal subunit protein bL12 (Myxococcus xanthus (strain DK1622)).